An 821-amino-acid chain; its full sequence is Frameshifted structural polyprotein (821 aa).

Positions 1–106 are disordered; sequence MNRGFFNMLG…KPKPGKRQRM (106 aa). A compositionally biased stretch (polar residues) spans 38 to 49; the sequence is LASQIQQLTTAV. A compositionally biased stretch (basic residues) spans 67 to 106; it reads PPPRQKKQAPKQPPKPKKPKTQEKKKKQPAKPKPGKRQRM. The segment at 93 to 101 is ribosome-binding; it reads KQPAKPKPG. The Peptidase S3 domain maps to 114-264; sequence RLFDVKNEDG…KTTPEGTEEW (151 aa). Catalysis depends on charge relay system residues H141, D163, and S215. Residues 265-279 form a functions as an uncleaved signal peptide for the precursor of protein E3/E2 region; it reads SAAPLVTAMCLLGNV. N278 carries an N-linked (GlcNAc...) asparagine; by host glycan. A disulfide bridge links C283 with C289. Residues N524 and N646 are each glycosylated (N-linked (GlcNAc...) asparagine; by host). Residues 696-716 form a helical membrane-spanning segment; the sequence is ILAVASATVAMMIGVTVAVLC. S-palmitoyl cysteine; by host attachment occurs at residues C724, C744, and C745. 2 helical membrane passes run 726 to 746 and 764 to 784; these read TPYA…LCCV and NSQP…IVLM.

The protein belongs to the alphavirus frameshifted structural polyprotein family. As to quaternary structure, homomultimer. Interacts with host karyopherin KPNA4; this interaction allows the nuclear import of the viral capsid protein. Interacts with spike glycoprotein E2. Interacts with host IRAK1; the interaction leads to inhibition of IRAK1-dependent signaling. In terms of assembly, the precursor of protein E3/E2 and E1 form a heterodimer shortly after synthesis. Processing of the precursor of protein E3/E2 into E2 and E3 results in a heterodimer of the spike glycoproteins E2 and E1. Spike at virion surface are constituted of three E2-E1 heterodimers. Specific enzymatic cleavages in vivo yield mature proteins. Capsid protein is auto-cleaved during polyprotein translation, unmasking a signal peptide at the N-terminus of the precursor of E3/E2. The remaining polyprotein is then targeted to the host endoplasmic reticulum, where host signal peptidase cleaves it into pE2 and TF. pE2 is further processed to mature E3 and E2 by host furin in trans-Golgi vesicle. Post-translationally, palmitoylated via thioester bonds. These palmitoylations may induce disruption of the C-terminus transmembrane. This would result in the reorientation of E2 C-terminus from lumenal to cytoplasmic side. In terms of processing, palmitoylated via thioester bonds.

It localises to the virion. The protein localises to the host cytoplasm. It is found in the host cell membrane. Its subcellular location is the host nucleus. The protein resides in the virion membrane. It carries out the reaction Autocatalytic release of the core protein from the N-terminus of the togavirus structural polyprotein by hydrolysis of a -Trp-|-Ser- bond.. In terms of biological role, forms an icosahedral capsid with a T=4 symmetry composed of 240 copies of the capsid protein surrounded by a lipid membrane through which penetrate 80 spikes composed of trimers of E1-E2 heterodimers. The capsid protein binds to the viral RNA genome at a site adjacent to a ribosome binding site for viral genome translation following genome release. Possesses a protease activity that results in its autocatalytic cleavage from the nascent structural protein. Following its self-cleavage, the capsid protein transiently associates with ribosomes, and within several minutes the protein binds to viral RNA and rapidly assembles into icosahedric core particles. The resulting nucleocapsid eventually associates with the cytoplasmic domain of the spike glycoprotein E2 at the cell membrane, leading to budding and formation of mature virions. In case of infection, new virions attach to target cells and after clathrin-mediated endocytosis their membrane fuses with the host endosomal membrane. This leads to the release of the nucleocapsid into the cytoplasm, followed by an uncoating event necessary for the genomic RNA to become accessible. The uncoating might be triggered by the interaction of capsid proteins with ribosomes. Binding of ribosomes would release the genomic RNA since the same region is genomic RNA-binding and ribosome-binding. Specifically inhibits interleukin-1 receptor-associated kinase 1/IRAK1-dependent signaling during viral entry, representing a means by which the alphaviruses may evade innate immune detection and activation prior to viral gene expression. Functionally, provides the signal sequence for the translocation of the precursor of protein E3/E2 to the host endoplasmic reticulum. Furin-cleaved E3 remains associated with spike glycoprotein E1 and mediates pH protection of the latter during the transport via the secretory pathway. After virion release from the host cell, the assembly protein E3 is gradually released in the extracellular space. Plays an essential role in viral attachment to target host cell, by binding to the cell receptor. Synthesized as a pE2 precursor which is processed by furin at the cell membrane just before virion budding, giving rise to E2-E1 heterodimer. The pE2-E1 heterodimer is stable, whereas E2-E1 is unstable and dissociate at low pH. pE2 is processed at the last step, presumably to avoid E1 fusion activation before its final export to cell surface. E2 C-terminus contains a transitory transmembrane that would be disrupted by palmitoylation, resulting in reorientation of the C-terminal tail from lumenal to cytoplasmic side. This step is critical since E2 C-terminus is involved in budding by interacting with capsid proteins. This release of E2 C-terminus in cytoplasm occurs lately in protein export, and precludes premature assembly of particles at the endoplasmic reticulum membrane. Its function is as follows. Plays a role in viral assembly and release. This chain is Frameshifted structural polyprotein, found in Sindbis virus (SINV).